The following is a 569-amino-acid chain: Urease subunit alpha (569 aa).

Residues 131–569 (GAIDSHIHFI…LPLAQRYLLL (439 aa)) enclose the Urease domain. Ni(2+)-binding residues include His-136, His-138, and Lys-219. Lys-219 is modified (N6-carboxylysine). His-221 is a binding site for substrate. Ni(2+) contacts are provided by His-248 and His-274. The active-site Proton donor is the His-322. Asp-362 contributes to the Ni(2+) binding site.

It belongs to the metallo-dependent hydrolases superfamily. Urease alpha subunit family. Heterotrimer of UreA (gamma), UreB (beta) and UreC (alpha) subunits. Three heterotrimers associate to form the active enzyme. Ni cation is required as a cofactor. Post-translationally, carboxylation allows a single lysine to coordinate two nickel ions.

The protein resides in the cytoplasm. The enzyme catalyses urea + 2 H2O + H(+) = hydrogencarbonate + 2 NH4(+). The protein operates within nitrogen metabolism; urea degradation; CO(2) and NH(3) from urea (urease route): step 1/1. This chain is Urease subunit alpha, found in Prochlorococcus marinus (strain NATL1A).